The primary structure comprises 1887 residues: Protein TIC 214 (1887 aa).

The next 6 membrane-spanning stretches (helical) occupy residues 18–38 (IINS…FSIG), 64–84 (FITG…HLAL), 87–107 (PHTI…WNNH), 124–144 (LSIQ…HFIL), 172–192 (VGWL…LVWI), and 221–241 (IFSI…PSPI). Disordered regions lie at residues 248–300 (EASK…EGWD), 785–805 (REEQ…DNKR), and 1569–1603 (LPSN…NLSP). Acidic residues predominate over residues 256 to 268 (VESEEERDVEIET). Over residues 1578-1597 (RSQETKEPPSQRERGSDIEN) the composition is skewed to basic and acidic residues.

The protein belongs to the TIC214 family. In terms of assembly, part of the Tic complex.

The protein resides in the plastid. Its subcellular location is the chloroplast inner membrane. Involved in protein precursor import into chloroplasts. May be part of an intermediate translocation complex acting as a protein-conducting channel at the inner envelope. The polypeptide is Protein TIC 214 (Solanum tuberosum (Potato)).